A 501-amino-acid polypeptide reads, in one-letter code: Acyl-CoA-binding domain-containing protein 5A (501 aa).

The ACB domain occupies 9–98; the sequence is YEQRFNAAVK…LKLILESMPV (90 aa). An acyl-CoA-binding positions include 20 to 29, 40 to 44, K66, and Y85; these read IQNLPPNGSF and YSYYK. Positions 173 to 405 are disordered; it reads IDLEDREDDD…GERWGADGPM (233 aa). A compositionally biased stretch (acidic residues) spans 176-195; sequence EDREDDDDEDEEGERDEVEE. Over residues 219–235 the composition is skewed to polar residues; that stretch reads SNGSISQHKGLSNGTHG. 3 stretches are compositionally biased toward basic and acidic residues: residues 236–254, 266–283, and 328–366; these read SKSD…HMNH, NSEK…HVAS, and RSQD…KRSD. A compositionally biased stretch (low complexity) spans 376–389; the sequence is SRSPASGSGSAGPQ. The stretch at 406–437 forms a coiled coil; the sequence is TENLNEQIICALARLQDDMQSVLQRLHTLEAL. A helical transmembrane segment spans residues 465–485; the sequence is WWPFDVSLGTVAFAVVWPFVV.

The protein belongs to the ATG37 family.

It localises to the membrane. Acyl-CoA binding protein which acts as the peroxisome receptor for pexophagy but is dispensable for aggrephagy and nonselective autophagy. Binds medium- and long-chain acyl-CoA esters. The sequence is that of Acyl-CoA-binding domain-containing protein 5A (acbd5a) from Danio rerio (Zebrafish).